The sequence spans 571 residues: Glutamate--tRNA ligase (571 aa).

Residues 110–120 (PNPNGPGTLGS) carry the 'HIGH' region motif.

This sequence belongs to the class-I aminoacyl-tRNA synthetase family. Glutamate--tRNA ligase type 2 subfamily.

The protein resides in the cytoplasm. It catalyses the reaction tRNA(Glu) + L-glutamate + ATP = L-glutamyl-tRNA(Glu) + AMP + diphosphate. In terms of biological role, catalyzes the attachment of glutamate to tRNA(Glu) in a two-step reaction: glutamate is first activated by ATP to form Glu-AMP and then transferred to the acceptor end of tRNA(Glu). In Methanosarcina acetivorans (strain ATCC 35395 / DSM 2834 / JCM 12185 / C2A), this protein is Glutamate--tRNA ligase.